Consider the following 269-residue polypeptide: uncharacterized protein (269 aa).

The protein to T.pallidum TP0678.

This is an uncharacterized protein from Borreliella burgdorferi (strain ATCC 35210 / DSM 4680 / CIP 102532 / B31) (Borrelia burgdorferi).